Here is a 156-residue protein sequence, read N- to C-terminus: Cell division protein SepF (156 aa).

A disordered region spans residues 15-58 (SDVVPEDEDDEVIDEEPESSFDTDRSVTPIPAASTQPSTSQRKS). Positions 18–35 (VPEDEDDEVIDEEPESSF) are enriched in acidic residues. Polar residues predominate over residues 47–57 (ASTQPSTSQRK).

Belongs to the SepF family. As to quaternary structure, homodimer. Interacts with FtsZ.

The protein resides in the cytoplasm. In terms of biological role, cell division protein that is part of the divisome complex and is recruited early to the Z-ring. Probably stimulates Z-ring formation, perhaps through the cross-linking of FtsZ protofilaments. Its function overlaps with FtsA. This chain is Cell division protein SepF, found in Bifidobacterium animalis subsp. lactis (strain AD011).